Consider the following 45-residue polypeptide: Large ribosomal subunit protein bL34 (45 aa).

Belongs to the bacterial ribosomal protein bL34 family.

The polypeptide is Large ribosomal subunit protein bL34 (Leifsonia xyli subsp. xyli (strain CTCB07)).